Consider the following 34-residue polypeptide: Cytochrome c oxidase subunit 6B (34 aa).

It belongs to the cytochrome c oxidase subunit 6B family. In terms of assembly, component of the cytochrome c oxidase (complex IV, CIV), a multisubunit enzyme composed of 14 subunits. The complex is composed of a catalytic core of 3 subunits MT-CO1, MT-CO2 and MT-CO3, encoded in the mitochondrial DNA, and 11 supernumerary subunits COX4I, COX5A, COX5B, COX6A, COX6B, COX6C, COX7A, COX7B, COX7C, COX8 and NDUFA4, which are encoded in the nuclear genome. The complex exists as a monomer or a dimer and forms supercomplexes (SCs) in the inner mitochondrial membrane with NADH-ubiquinone oxidoreductase (complex I, CI) and ubiquinol-cytochrome c oxidoreductase (cytochrome b-c1 complex, complex III, CIII), resulting in different assemblies (supercomplex SCI(1)III(2)IV(1) and megacomplex MCI(2)III(2)IV(2)). Post-translationally, the N-terminus is blocked.

The protein localises to the mitochondrion inner membrane. The protein operates within energy metabolism; oxidative phosphorylation. Functionally, component of the cytochrome c oxidase, the last enzyme in the mitochondrial electron transport chain which drives oxidative phosphorylation. The respiratory chain contains 3 multisubunit complexes succinate dehydrogenase (complex II, CII), ubiquinol-cytochrome c oxidoreductase (cytochrome b-c1 complex, complex III, CIII) and cytochrome c oxidase (complex IV, CIV), that cooperate to transfer electrons derived from NADH and succinate to molecular oxygen, creating an electrochemical gradient over the inner membrane that drives transmembrane transport and the ATP synthase. Cytochrome c oxidase is the component of the respiratory chain that catalyzes the reduction of oxygen to water. Electrons originating from reduced cytochrome c in the intermembrane space (IMS) are transferred via the dinuclear copper A center (CU(A)) of subunit 2 and heme A of subunit 1 to the active site in subunit 1, a binuclear center (BNC) formed by heme A3 and copper B (CU(B)). The BNC reduces molecular oxygen to 2 water molecules using 4 electrons from cytochrome c in the IMS and 4 protons from the mitochondrial matrix. The protein is Cytochrome c oxidase subunit 6B of Thunnus obesus (Bigeye tuna).